The primary structure comprises 359 residues: Probable dual-specificity RNA methyltransferase RlmN (359 aa).

Glu-91 (proton acceptor) is an active-site residue. Residues 97–329 (QHYGHSVCVT…KKNGVNCVVR (233 aa)) form the Radical SAM core domain. A disulfide bridge connects residues Cys-104 and Cys-340. Residues Cys-111, Cys-115, and Cys-118 each coordinate [4Fe-4S] cluster. S-adenosyl-L-methionine is bound by residues 163–164 (GE), Ser-195, 218–220 (SLH), and Asn-296. Cys-340 acts as the S-methylcysteine intermediate in catalysis.

It belongs to the radical SAM superfamily. RlmN family. [4Fe-4S] cluster serves as cofactor.

It localises to the cytoplasm. The enzyme catalyses adenosine(2503) in 23S rRNA + 2 reduced [2Fe-2S]-[ferredoxin] + 2 S-adenosyl-L-methionine = 2-methyladenosine(2503) in 23S rRNA + 5'-deoxyadenosine + L-methionine + 2 oxidized [2Fe-2S]-[ferredoxin] + S-adenosyl-L-homocysteine. The catalysed reaction is adenosine(37) in tRNA + 2 reduced [2Fe-2S]-[ferredoxin] + 2 S-adenosyl-L-methionine = 2-methyladenosine(37) in tRNA + 5'-deoxyadenosine + L-methionine + 2 oxidized [2Fe-2S]-[ferredoxin] + S-adenosyl-L-homocysteine. In terms of biological role, specifically methylates position 2 of adenine 2503 in 23S rRNA and position 2 of adenine 37 in tRNAs. The sequence is that of Probable dual-specificity RNA methyltransferase RlmN from Streptococcus pyogenes serotype M5 (strain Manfredo).